The primary structure comprises 238 residues: 2-C-methyl-D-erythritol 4-phosphate cytidylyltransferase (238 aa).

Belongs to the IspD/TarI cytidylyltransferase family. IspD subfamily.

The catalysed reaction is 2-C-methyl-D-erythritol 4-phosphate + CTP + H(+) = 4-CDP-2-C-methyl-D-erythritol + diphosphate. It participates in isoprenoid biosynthesis; isopentenyl diphosphate biosynthesis via DXP pathway; isopentenyl diphosphate from 1-deoxy-D-xylulose 5-phosphate: step 2/6. Functionally, catalyzes the formation of 4-diphosphocytidyl-2-C-methyl-D-erythritol from CTP and 2-C-methyl-D-erythritol 4-phosphate (MEP). The polypeptide is 2-C-methyl-D-erythritol 4-phosphate cytidylyltransferase (Acinetobacter baumannii (strain ATCC 17978 / DSM 105126 / CIP 53.77 / LMG 1025 / NCDC KC755 / 5377)).